Here is a 451-residue protein sequence, read N- to C-terminus: Phosphoglucosamine mutase (451 aa).

The active-site Phosphoserine intermediate is the Ser-101. 4 residues coordinate Mg(2+): Ser-101, Asp-240, Asp-242, and Asp-244. A Phosphoserine modification is found at Ser-101.

It belongs to the phosphohexose mutase family. Mg(2+) serves as cofactor. In terms of processing, activated by phosphorylation.

It catalyses the reaction alpha-D-glucosamine 1-phosphate = D-glucosamine 6-phosphate. Catalyzes the conversion of glucosamine-6-phosphate to glucosamine-1-phosphate. The sequence is that of Phosphoglucosamine mutase from Nitrosococcus oceani (strain ATCC 19707 / BCRC 17464 / JCM 30415 / NCIMB 11848 / C-107).